Here is a 177-residue protein sequence, read N- to C-terminus: Small ribosomal subunit protein uS5 (177 aa).

Residues 14–77 (LQEKLITVNR…EKARHNMIDI (64 aa)) enclose the S5 DRBM domain.

The protein belongs to the universal ribosomal protein uS5 family. In terms of assembly, part of the 30S ribosomal subunit. Contacts proteins S4 and S8.

Functionally, with S4 and S12 plays an important role in translational accuracy. Located at the back of the 30S subunit body where it stabilizes the conformation of the head with respect to the body. This is Small ribosomal subunit protein uS5 from Blochmanniella floridana.